The sequence spans 220 residues: UPF0441 protein Spro_4274 (220 aa).

The tract at residues 181-220 (MAPKPAVTNTVTRGGFGESVAKQTSMQRSSATSSSRSMGG) is disordered. Positions 203 to 220 (QTSMQRSSATSSSRSMGG) are enriched in low complexity.

This sequence belongs to the UPF0441 family.

The chain is UPF0441 protein Spro_4274 from Serratia proteamaculans (strain 568).